Consider the following 226-residue polypeptide: Putative ABC transporter ATP-binding protein BH02760 (226 aa).

Residues 4-222 (IKFDKVTQVF…IPLVAIKEYI (219 aa)) enclose the ABC transporter domain. 35-42 (GANGSGKS) is an ATP binding site.

The protein belongs to the ABC transporter superfamily.

It localises to the cell inner membrane. Probably part of an ABC transporter complex. Responsible for energy coupling to the transport system. The chain is Putative ABC transporter ATP-binding protein BH02760 from Bartonella henselae (strain ATCC 49882 / DSM 28221 / CCUG 30454 / Houston 1) (Rochalimaea henselae).